The primary structure comprises 478 residues: MAISSAEGMELQDPKMNGALPGNAVEQEHEGFLPSHSPSPGRKPAQFMDFEGKTSFGMSVFNLSNAIMGSGILGLAYAMAHTGILLFLALLLCIALLSSYSIHLLLTCAGVVGIRAYEQLGQRALGPAGKVVVAAVICLHNVGAMSSYLFIIKSELPLVIATFLDMDPEGDWFLKGNLLIIIVSVLIILPLALMRHLGYLGYTSGLSLTCMLFFLISVIYKKFQLGCTVGHNGTAVESKSSPSLPIHGLNTSCEAQMFTADSQMFYTVPIMAFAFVCHPEVLPIYTELCRPSKRRMQAVANVSIGAMFCMYGLTATFGYLTFYSSVEAEMLHMYSQHDLLILCVRLAVLLAVTLTVPVVLFPIRRALQQLLFPSKAFSWPRHVAIALILLVLVNVLVICVPTIRDIFGVIGSTSAPSLIFILPSIFYLRIVPSEVEPLYSWPKIQALCFGVLGVLFMAISLGFMFANWATGQSHVSGH.

The segment at Met1–Leu20 is disordered. Topologically, residues Met1–Gly57 are cytoplasmic. Residues Met58–Ala80 traverse the membrane as a helical segment. Residues His81 to Cys93 are Extracellular-facing. A helical transmembrane segment spans residues Ile94–Ile114. The Cytoplasmic portion of the chain corresponds to Arg115 to Val131. A helical membrane pass occupies residues Val132 to Ile152. Residues Lys153–Trp172 lie on the Extracellular side of the membrane. The helical transmembrane segment at Phe173–Leu193 threads the bilayer. The Cytoplasmic segment spans residues Met194 to Gly198. The chain crosses the membrane as a helical span at residues Tyr199–Ile219. The Extracellular portion of the chain corresponds to Tyr220 to Gln263. The cysteines at positions 227 and 253 are disulfide-linked. N-linked (GlcNAc...) asparagine glycosylation occurs at Asn232. A helical transmembrane segment spans residues Met264–Ile284. At Tyr285–Asn301 the chain is on the cytoplasmic side. A helical transmembrane segment spans residues Val302–Phe322. Over Tyr323 to Leu340 the chain is Extracellular. The helical transmembrane segment at Ile341 to Phe361 threads the bilayer. At Pro362–His382 the chain is on the cytoplasmic side. Residues Val383–Ile403 traverse the membrane as a helical segment. Topologically, residues Arg404–Asp405 are extracellular. A helical transmembrane segment spans residues Ile406–Phe426. At Tyr427 to Gln445 the chain is on the cytoplasmic side. Residues Ala446–Ala466 form a helical membrane-spanning segment. At Asn467 to His478 the chain is on the extracellular side.

It belongs to the amino acid/polyamine transporter 2 family.

The protein localises to the cell membrane. The enzyme catalyses L-serine(out) + Na(+)(out) + H(+)(in) = L-serine(in) + Na(+)(in) + H(+)(out). It carries out the reaction L-alanine(out) + Na(+)(out) + H(+)(in) = L-alanine(in) + Na(+)(in) + H(+)(out). The catalysed reaction is glycine(out) + Na(+)(out) + H(+)(in) = glycine(in) + Na(+)(in) + H(+)(out). It catalyses the reaction L-glutamine(out) + Na(+)(out) + H(+)(in) = L-glutamine(in) + Na(+)(in) + H(+)(out). The enzyme catalyses L-asparagine(out) + Na(+)(out) + H(+)(in) = L-asparagine(in) + Na(+)(in) + H(+)(out). It carries out the reaction L-histidine(out) + Na(+)(out) + H(+)(in) = L-histidine(in) + Na(+)(in) + H(+)(out). The catalysed reaction is L-cysteine(out) + Na(+)(out) + H(+)(in) = L-cysteine(in) + Na(+)(in) + H(+)(out). With respect to regulation, not inhibited by lithium. Partial allosteric regulation on ions sodium binding. In terms of biological role, symporter that cotransports neutral amino acids and sodium ions, coupled to an H(+) antiporter activity. Releases L-glutamine and glycine from astroglial cells and may participate in the glutamate/GABA-glutamine cycle and the NMDA receptors activation. In addition contributes significantly to L-glutamine uptake in retina, namely in ganglion and Mueller cells and, therefore participates in the retinal glutamate-glutamine cycle. The transport activity is pH sensitive, Li(+) tolerant, bidirectional and associated with large uncoupled fluxes of protons. The transport is electroneutral coupled to the cotransport of 1 Na(+) and the antiport of 1 H(+). May have particular importance for modulation of net hepatic glutamine flux. This Bos taurus (Bovine) protein is Sodium-coupled neutral amino acid transporter 5.